Consider the following 430-residue polypeptide: Gamma-glutamyl phosphate reductase (430 aa).

Belongs to the gamma-glutamyl phosphate reductase family.

It localises to the cytoplasm. It catalyses the reaction L-glutamate 5-semialdehyde + phosphate + NADP(+) = L-glutamyl 5-phosphate + NADPH + H(+). Its pathway is amino-acid biosynthesis; L-proline biosynthesis; L-glutamate 5-semialdehyde from L-glutamate: step 2/2. Functionally, catalyzes the NADPH-dependent reduction of L-glutamate 5-phosphate into L-glutamate 5-semialdehyde and phosphate. The product spontaneously undergoes cyclization to form 1-pyrroline-5-carboxylate. The polypeptide is Gamma-glutamyl phosphate reductase (Rhodopseudomonas palustris (strain HaA2)).